The following is a 367-amino-acid chain: Aflatoxin B1 aldehyde reductase member 2 (367 aa).

The N-terminal 46 residues, 1–46, are a transit peptide targeting the mitochondrion; that stretch reads MLRAVSRAVSRAAVRCAWRSGPSVARPLAMSRSPAPRAVSGAPLRP. The disordered stretch occupies residues 27–46; the sequence is PLAMSRSPAPRAVSGAPLRP. At Ser40 the chain carries Phosphoserine. Residue Thr48 is modified to Phosphothreonine. Residue Asp80 coordinates NADP(+). Tyr85 functions as the Proton donor in the catalytic mechanism. Residue Lys136 is modified to N6-acetyllysine. His149 contacts substrate. NADP(+)-binding positions include 179–180, Gln205, 234–244, and Arg258; these read SN and NPLAGGLLTGK. The residue at position 244 (Lys244) is an N6-succinyllysine. Residue Ser263 is modified to Phosphoserine. Residues Tyr268 and Arg271 each contribute to the substrate site. An NADP(+)-binding site is contributed by 326 to 334; that stretch reads SSLEQLEQN. Position 367 (Arg367) interacts with substrate.

It belongs to the aldo/keto reductase family. Aldo/keto reductase 2 subfamily. In terms of assembly, homodimer. Heterodimer with AKR7A1.

The protein resides in the mitochondrion. It localises to the golgi apparatus. Its subcellular location is the golgi stack. It is found in the cytoplasm. The catalysed reaction is 4-hydroxybutanoate + NADP(+) = succinate semialdehyde + NADPH + H(+). In terms of biological role, catalyzes the NADPH-dependent reduction of succinic semialdehyde to gamma-hydroxybutyrate. May have an important role in producing the neuromodulator gamma-hydroxybutyrate (GHB). Has broad substrate specificity. Can reduce the dialdehyde protein-binding form of aflatoxin B1 (AFB1) to the non-binding AFB1 dialcohol. Acts as a 2-carboxybenzaldehyde reductase. This Rattus norvegicus (Rat) protein is Aflatoxin B1 aldehyde reductase member 2 (Akr7a2).